The primary structure comprises 226 residues: Survival motor neuron protein (226 aa).

The segment covering Ala-35–Glu-44 has biased composition (basic and acidic residues). The disordered stretch occupies residues Ala-35 to Val-68. Residues Ser-69–Arg-128 form the Tudor domain. Positions Asp-137–Pro-172 are disordered. Positions Lys-154–Arg-163 are enriched in basic residues. A required for homodimerization region spans residues Ser-159–Lys-226.

This sequence belongs to the SMN family. As to quaternary structure, homodimer (via C-terminal region). Component of the core survival motor neuron (SMN) complex composed of Smn, Gem2, Gem3, rig/Gem5 and one of 3 almost identical Gem4 paralogs encoded by Glos/Gem4a, Gem4b or Gem4c. Interacts with Gem3 (via C-terminus); the interaction is direct and stabilizes Smn. Part of a minimal SMN complex composed of Smn and Gem2 only; this complex is active in UsnRNP assembly. The SMN complex associates with the entire set of spliceosomal snRNP Sm proteins, SmB, SmD1, SmD2, SmD3, SmE, SmF and SmG, and with the snRNP-specific proteins snRNP-U1-70K, U2A, snf/U1A and U5-116KD. Interacts with Glos/Gem4a; the interaction is probably indirect. Interacts with Sbat and Vlet; Sbat and Vlet, along with Hez, may form an accessory subcomplex involved in SMN complex function. Interacts weakly with Gem3. Interacts with SmB and SmD1; the interaction is favored by methylation of the Sm proteins. Interacts with Actn; the interaction occurs in thoracic tissues and in adult flies. Interacts with Rpp20. Interacts with msk and Snup; these interactions are RNA-dependent. In late first instar larvae, expressed in pNBs. Expression increases as the pNBs enlarge, with the highest accumulation observed in dividing pNBs of second and third instar larvae. Enriched in type ID (thoracic and brain lobe), type IA and all the mira-expressing NBs of the brain lobes. In larvae, also expressed in muscle fibers. In larval and adult testis, expressed in germline stem cells and gonialblast, expression decreases as cells differentiate into cysts and spermatocytes. In adult fly thorax, expressed in the IFMs. In adult ovary, expressed in germline stem cells, cystoblasts, follicle cells, nurse cells and oocyte (at protein level). Also expressed in larval salivary glands.

Its subcellular location is the cytoplasm. The protein localises to the nucleus. It is found in the U-body. The protein resides in the gem. It localises to the cajal body. Its subcellular location is the myofibril. The protein localises to the sarcomere. It is found in the i band. The protein resides in the z line. In terms of biological role, core component of the survival motor neuron (SMN) complex that plays an essential role in spliceosomal small nuclear ribonucleoprotein (snRNP) assembly in the cytoplasm, is required for pre-mRNA splicing in the nucleus and acts as a chaperone that discriminates target and non-target RNAs of Sm proteins. A major component of nuclear bodies known as gems (gemini of Cajal bodies) thought to be storage depots of excess SMN complexes. Required for normal expression of spliceosomal snRNAs and for U12 intron splicing. Required in cholinergic neurons, but not in motor neurons, to ensure correct splicing and proper levels of stas mRNA and normal neurotransmitter release by motor neurons. However, Smn is required in motor neurons, but not in cholinergic neurons, for normal motor behavior but plays no role in synaptic transmission according to a report. In both muscle and neurons, required for the formation of a normal neuromuscular junction (NMJ) structure. Plays a neuron-specific role in long-term homeostatic compensation at the larval NMJ. In the thorax of adult flies, required for Act88F, an indirect flight muscle (IFM)-specific actin, expression and for proper IFM myofibril formation. In nurse cells, oocytes and follicle cells, required to maintain normal organization of nuclear compartments including chromosomes, nucleoli, Cajal bodies, histone locus bodies and heterochromatin. Required for the functional integrity of the cytoplasmic U snRNP body (U body) and P body. Required in dividing postembryonic neuroblasts (pNBs) for the correct basal localization of mira. The tight regulation of its expression is critical for stem cell division, proliferation and differentiation in male germline and developing central nervous system (CNS). Required for tracheal terminal cell lumen formation. This chain is Survival motor neuron protein, found in Drosophila melanogaster (Fruit fly).